Consider the following 231-residue polypeptide: ATP synthase subunit a (231 aa).

The next 5 membrane-spanning stretches (helical) occupy residues 14 to 34, 78 to 98, 107 to 127, 174 to 194, and 196 to 216; these read GFLK…VLAV, YLGF…CTVI, SLST…FFGI, MIIG…MTAL, and LLTG…YIAA.

Belongs to the ATPase A chain family. In terms of assembly, F-type ATPases have 2 components, CF(1) - the catalytic core - and CF(0) - the membrane proton channel. CF(1) has five subunits: alpha(3), beta(3), gamma(1), delta(1), epsilon(1). CF(0) has three main subunits: a(1), b(2) and c(9-12). The alpha and beta chains form an alternating ring which encloses part of the gamma chain. CF(1) is attached to CF(0) by a central stalk formed by the gamma and epsilon chains, while a peripheral stalk is formed by the delta and b chains.

It localises to the cell inner membrane. Functionally, key component of the proton channel; it plays a direct role in the translocation of protons across the membrane. This Albidiferax ferrireducens (strain ATCC BAA-621 / DSM 15236 / T118) (Rhodoferax ferrireducens) protein is ATP synthase subunit a.